The chain runs to 79 residues: Small ribosomal subunit protein bS18B (79 aa).

This sequence belongs to the bacterial ribosomal protein bS18 family. Part of the 30S ribosomal subunit. Forms a tight heterodimer with protein bS6.

Its function is as follows. Binds as a heterodimer with protein bS6 to the central domain of the 16S rRNA, where it helps stabilize the platform of the 30S subunit. This chain is Small ribosomal subunit protein bS18B, found in Saccharopolyspora erythraea (strain ATCC 11635 / DSM 40517 / JCM 4748 / NBRC 13426 / NCIMB 8594 / NRRL 2338).